The chain runs to 744 residues: Prestin (744 aa).

The Cytoplasmic segment spans residues 1–79 (MDHAEENEIP…WLPAYKFKEY (79 aa)). Residues 80 to 105 (VLGDLVSGISTGVLQLPQGLAFAMLA) form a helical membrane-spanning segment. The Extracellular segment spans residues 106-109 (AVPP). Residues 110-125 (VFGLYSSFYPVIMYCF) form a helical membrane-spanning segment. Residues 126-137 (FGTSRHISIGPF) lie on the Cytoplasmic side of the membrane. The chain crosses the membrane as a helical span at residues 138 to 147 (AVISLMIGGV). Over 148–178 (AVRLVPDDIVIPGGVNATNGTEARDALRVKV) the chain is Extracellular. Positions 158–168 (IPGGVNATNGT) match the Involved in motor function motif. Residues N163 and N166 are each glycosylated (N-linked (GlcNAc...) asparagine). Residues 179–196 (AMSVTLLSGIIQFCLGVC) traverse the membrane as a helical segment. Residues 197-208 (RFGFVAIYLTEP) lie on the Cytoplasmic side of the membrane. Residues 209–230 (LVRGFTTAAAVHVFTSMLKYLF) form a helical membrane-spanning segment. Over 231-243 (GVKTKRYSGIFSV) the chain is Extracellular. The helical intramembrane region spans 244–252 (VYSTVAVLQ). Topologically, residues 253–258 (NVKNLN) are extracellular. The chain crosses the membrane as a helical span at residues 259–282 (VCSLGVGLMVFGLLLGGKEFNERF). Residues 283–291 (KEKLPAPIP) lie on the Cytoplasmic side of the membrane. A helical transmembrane segment spans residues 292 to 304 (LEFFAVVMGTGIS). Residues 305 to 337 (AGFNLHESYSVDVVGTLPLGLLPPANPDTSLFH) are Extracellular-facing. Residues 338–361 (LVYVDAIAIAIVGFSVTISMAKTL) traverse the membrane as a helical segment. The Cytoplasmic segment spans residues 362–370 (ANKHGYQVD). Residues 371–388 (GNQELIALGICNSIGSLF) form a helical membrane-spanning segment. The Extracellular portion of the chain corresponds to 389–396 (QTFSISCS). The chain crosses the membrane as a helical span at residues 397-406 (LSRSLVQEGT). S398 lines the salicylate pocket. At 407 to 410 (GGKT) the chain is on the cytoplasmic side. A helical transmembrane segment spans residues 411 to 429 (QLAGCLASLMILLVILATG). Topologically, residues 430–436 (FLFESLP) are extracellular. A helical membrane pass occupies residues 437–455 (QAVLSAIVIVNLKGMFMQF). The Cytoplasmic segment spans residues 456–469 (SDLPFFWRTSKIEL). The helical transmembrane segment at 470 to 484 (TIWLTTFVSSLFLGL) threads the bilayer. A topological domain (extracellular) is located at residue D485. The chain crosses the membrane as a helical span at residues 486–497 (YGLITAVIIALL). The Cytoplasmic portion of the chain corresponds to 498–744 (TVIYRTQSPS…PNATPTTPEA (247 aa)). An extended region for STAS domain region spans residues 505 to 718 (SPSYKVLGQL…AVLGSHVREA (214 aa)). An STAS domain is found at 525–713 (AYEEVKEIPG…HSIHDAVLGS (189 aa)). A disordered region spans residues 717-744 (EAMAEQEASAPPPQDDMEPNATPTTPEA).

The protein belongs to the SLC26A/SulP transporter (TC 2.A.53) family. As to quaternary structure, homodimer. Interacts (via STAS domain) with CALM; this interaction is calcium-dependent and the STAS domain interacts with only one lobe of CALM which is an elongated conformation. Interacts with MYH1. Highly expressed in mature outer hair cells, but not in inner hair cells or other cells of the basilar membrane and the organ of Corti.

The protein resides in the lateral cell membrane. It catalyses the reaction 2 hydrogencarbonate(in) + chloride(out) = 2 hydrogencarbonate(out) + chloride(in). Voltage-sensitive motor protein that drives outer hair cell (OHC) electromotility (eM) and participates in sound amplification in the hearing organ. Converts changes in the transmembrane electric potential into mechanical displacements resulting in the coupling of its expansion to movement of a charged voltage sensor across the lipid membrane. The nature of the voltage sensor is not completely clear, and two models compete. In the first model, acts as an incomplete transporter where intracellular chloride anion acts as extrinsic voltage sensor that drives conformational change in the protein which is sufficient to produce a length change in the plane of the membrane and hence in the length of the OHC. The second model in which multiple charged amino acid residues are distributed at the intracellular and extracellular membrane interfaces that form an intrinsic voltage sensor, whose movement produces the non-linear capacitance (NLC). However, the effective voltage sensor may be the result of a hybrid voltage sensor assembled from intrinsic charge (charged residues) and extrinsic charge (bound anion). Notably, binding of anions to the anion-binding pocket partially neutralizes the intrinsic positive charge rather than to form an electrically negative sensor, therefore remaining charge may serve as voltage sensor that, after depolarization, moves from down (expanded state) to up (contracted) conformation, which is accompanied by an eccentric contraction of the intermembrane cross-sectional area of the protein as well as a major increase in the hydrophobic thickness of the protein having as consequences the plasma membrane thickening and the cell contraction after membrane depolarization. The anion-binding pocket transits from the inward-open (Down) state, where it is exposed toward the intracellular solvent in the absence of anion, to the occluded (Up) state upon anion binding. Salicylate competes for the anion-binding site and inhibits the voltage-sensor movement, and therefore inhibits the charge transfer and electromotility by displacing Cl(-) from the anion-binding site and by preventing the structural transitions to the contracted state. In addition, can act as a weak Cl(-)/HCO3 (-) antiporter across the cell membrane and so regulate the intracellular pH of the outer hair cells (OHCs), while firstly found as being unable to mediate electrogenic anion transport. Moreover, supports a role in cardiac mechanical amplification serving as an elastic element to enhance the actomyosin- based sarcomere contraction system. The sequence is that of Prestin from Meriones unguiculatus (Mongolian jird).